A 595-amino-acid chain; its full sequence is Indole-3-acetic acid-amido synthetase GH3.3 (595 aa).

It belongs to the IAA-amido conjugating enzyme family.

Functionally, catalyzes the synthesis of indole-3-acetic acid (IAA)-amino acid conjugates, providing a mechanism for the plant to cope with the presence of excess auxin. Strongly reactive with Glu, Gln, Trp, Asp, Ala, Leu, Phe, Gly, Tyr, Met, Ile and Val. Little or no product formation with His, Ser, Thr, Arg, Lys, or Cys. Also active on pyruvic and butyric acid analogs of IAA, PAA and the synthetic auxin naphthaleneacetic acid (NAA). The two chlorinated synthetic auxin herbicides 2,4-D and 3,6-dichloro-o-anisic acid (dicamba) cannot be used as substrates. This chain is Indole-3-acetic acid-amido synthetase GH3.3 (GH3.3), found in Arabidopsis thaliana (Mouse-ear cress).